Here is a 314-residue protein sequence, read N- to C-terminus: Carbamate kinase (314 aa).

The protein belongs to the carbamate kinase family. In terms of assembly, homodimer.

It carries out the reaction hydrogencarbonate + NH4(+) + ATP = carbamoyl phosphate + ADP + H2O + H(+). Its pathway is metabolic intermediate metabolism; carbamoyl phosphate degradation; CO(2) and NH(3) from carbamoyl phosphate: step 1/1. The chain is Carbamate kinase (CBK) from Trichomonas vaginalis.